Reading from the N-terminus, the 421-residue chain is GTPase Obg (421 aa).

Positions 1-158 (MFIDVAKIEL…KTIKLELKLL (158 aa)) constitute an Obg domain. Positions 21–40 (AFRREKYEPSGGPAGGDGGD) are disordered. The 170-residue stretch at 159 to 328 (ADVGLIGLPN…LMYLIADTLD (170 aa)) folds into the OBG-type G domain. Residues 165 to 172 (GLPNVGKS), 190 to 194 (FTTLE), 211 to 214 (DIPG), 281 to 284 (NKTD), and 309 to 311 (SAA) each bind GTP. The Mg(2+) site is built by serine 172 and threonine 192. One can recognise an OCT domain in the interval 344–421 (FEEEKEPDFK…IGDVEFDFYE (78 aa)).

This sequence belongs to the TRAFAC class OBG-HflX-like GTPase superfamily. OBG GTPase family. As to quaternary structure, monomer. The cofactor is Mg(2+).

The protein resides in the cytoplasm. Functionally, an essential GTPase which binds GTP, GDP and possibly (p)ppGpp with moderate affinity, with high nucleotide exchange rates and a fairly low GTP hydrolysis rate. Plays a role in control of the cell cycle, stress response, ribosome biogenesis and in those bacteria that undergo differentiation, in morphogenesis control. The chain is GTPase Obg from Finegoldia magna (strain ATCC 29328 / DSM 20472 / WAL 2508) (Peptostreptococcus magnus).